The sequence spans 99 residues: DNA-binding protein Fis (99 aa).

The H-T-H motif DNA-binding region spans 75–94 (QTRAATMLGINRGTLRKKLK).

The protein belongs to the transcriptional regulatory Fis family. In terms of assembly, homodimer.

Its function is as follows. Activates ribosomal RNA transcription. Plays a direct role in upstream activation of rRNA promoters. This is DNA-binding protein Fis from Pasteurella multocida (strain Pm70).